The following is a 408-amino-acid chain: Glutaryl-CoA dehydrogenase, mitochondrial (408 aa).

The N-terminal 13 residues, 1–13 (KGGKTQGRSAKSS), are a transit peptide targeting the mitochondrion. Substrate contacts are provided by residues 107-108 (RS) and serine 156. FAD-binding positions include 147–156 (FGLTEPNHGS), serine 156, and 182–184 (WIT). Lysine 210 is modified (N6-acetyllysine). 257–264 (FGCLNNAR) contributes to the substrate binding site. FAD-binding positions include arginine 289, glutamine 300, and 357-361 (DMLGG). Glutamate 384 acts as the Proton acceptor in catalysis. Glycine 385 serves as a coordination point for substrate. Residues threonine 386, 386-388 (THD), and phenylalanine 404 contribute to the FAD site.

This sequence belongs to the acyl-CoA dehydrogenase family. As to quaternary structure, homotetramer. Requires FAD as cofactor.

It is found in the mitochondrion matrix. The catalysed reaction is glutaryl-CoA + oxidized [electron-transfer flavoprotein] + 2 H(+) = (2E)-butenoyl-CoA + reduced [electron-transfer flavoprotein] + CO2. It participates in amino-acid metabolism; lysine degradation. Its pathway is amino-acid metabolism; tryptophan metabolism. In terms of biological role, catalyzes the oxidative decarboxylation of glutaryl-CoA to crotonyl-CoA and CO(2) in the degradative pathway of L-lysine, L-hydroxylysine, and L-tryptophan metabolism. It uses electron transfer flavoprotein as its electron acceptor. The sequence is that of Glutaryl-CoA dehydrogenase, mitochondrial (GCDH) from Sus scrofa (Pig).